Here is a 215-residue protein sequence, read N- to C-terminus: Probable transaldolase (215 aa).

Lys-83 (schiff-base intermediate with substrate) is an active-site residue.

It belongs to the transaldolase family. Type 3B subfamily.

It localises to the cytoplasm. It carries out the reaction D-sedoheptulose 7-phosphate + D-glyceraldehyde 3-phosphate = D-erythrose 4-phosphate + beta-D-fructose 6-phosphate. The protein operates within carbohydrate degradation; pentose phosphate pathway; D-glyceraldehyde 3-phosphate and beta-D-fructose 6-phosphate from D-ribose 5-phosphate and D-xylulose 5-phosphate (non-oxidative stage): step 2/3. Transaldolase is important for the balance of metabolites in the pentose-phosphate pathway. In Desulforudis audaxviator (strain MP104C), this protein is Probable transaldolase.